A 317-amino-acid chain; its full sequence is Acetyl-coenzyme A carboxylase carboxyl transferase subunit alpha (317 aa).

The CoA carboxyltransferase C-terminal domain maps to 43 to 293 (RVRESMADIY…GDVISNALGE (251 aa)).

This sequence belongs to the AccA family. Acetyl-CoA carboxylase is a heterohexamer composed of biotin carboxyl carrier protein (AccB), biotin carboxylase (AccC) and two subunits each of ACCase subunit alpha (AccA) and ACCase subunit beta (AccD).

The protein resides in the cytoplasm. It catalyses the reaction N(6)-carboxybiotinyl-L-lysyl-[protein] + acetyl-CoA = N(6)-biotinyl-L-lysyl-[protein] + malonyl-CoA. The protein operates within lipid metabolism; malonyl-CoA biosynthesis; malonyl-CoA from acetyl-CoA: step 1/1. Functionally, component of the acetyl coenzyme A carboxylase (ACC) complex. First, biotin carboxylase catalyzes the carboxylation of biotin on its carrier protein (BCCP) and then the CO(2) group is transferred by the carboxyltransferase to acetyl-CoA to form malonyl-CoA. The polypeptide is Acetyl-coenzyme A carboxylase carboxyl transferase subunit alpha (Rhizobium rhizogenes (strain K84 / ATCC BAA-868) (Agrobacterium radiobacter)).